The primary structure comprises 234 residues: 1-(5-phosphoribosyl)-5-[(5-phosphoribosylamino)methylideneamino] imidazole-4-carboxamide isomerase (234 aa).

Aspartate 9 (proton acceptor) is an active-site residue. Catalysis depends on aspartate 131, which acts as the Proton donor.

This sequence belongs to the HisA/HisF family.

It is found in the cytoplasm. The catalysed reaction is 1-(5-phospho-beta-D-ribosyl)-5-[(5-phospho-beta-D-ribosylamino)methylideneamino]imidazole-4-carboxamide = 5-[(5-phospho-1-deoxy-D-ribulos-1-ylimino)methylamino]-1-(5-phospho-beta-D-ribosyl)imidazole-4-carboxamide. It participates in amino-acid biosynthesis; L-histidine biosynthesis; L-histidine from 5-phospho-alpha-D-ribose 1-diphosphate: step 4/9. This chain is 1-(5-phosphoribosyl)-5-[(5-phosphoribosylamino)methylideneamino] imidazole-4-carboxamide isomerase, found in Staphylococcus aureus (strain bovine RF122 / ET3-1).